Here is a 288-residue protein sequence, read N- to C-terminus: Mycothiol S-conjugate amidase (288 aa).

Residues histidine 12, aspartate 15, and histidine 142 each coordinate Zn(2+).

The protein belongs to the MshB deacetylase family. Mca subfamily. In terms of assembly, monomer. Requires Zn(2+) as cofactor.

It carries out the reaction mycothiol S-conjugate + H2O = an N-acetyl-L-cysteine-S-conjugate + 1D-myo-inositol 2-amino-2-deoxy-alpha-D-glucopyranoside. Partially inhibited by MSH when MSmB (a bimane derivative of MSH) is used as substrate. Functionally, a mycothiol (MSH, N-acetyl-cysteinyl-glucosaminyl-inositol) S-conjugate amidase, it recycles conjugated MSH to the N-acetyl cysteine conjugate and the MSH precursor. Involved in MSH-dependent detoxification of a number of alkylating agents and antibiotics. Activity is specific for the mycothiol moiety. This is Mycothiol S-conjugate amidase from Mycolicibacterium smegmatis (strain ATCC 700084 / mc(2)155) (Mycobacterium smegmatis).